The sequence spans 251 residues: Pyrroloquinoline-quinone synthase (251 aa).

Belongs to the PqqC family.

It carries out the reaction 6-(2-amino-2-carboxyethyl)-7,8-dioxo-1,2,3,4,7,8-hexahydroquinoline-2,4-dicarboxylate + 3 O2 = pyrroloquinoline quinone + 2 H2O2 + 2 H2O + H(+). It functions in the pathway cofactor biosynthesis; pyrroloquinoline quinone biosynthesis. Its function is as follows. Ring cyclization and eight-electron oxidation of 3a-(2-amino-2-carboxyethyl)-4,5-dioxo-4,5,6,7,8,9-hexahydroquinoline-7,9-dicarboxylic-acid to PQQ. This is Pyrroloquinoline-quinone synthase from Pseudomonas syringae pv. tomato (strain ATCC BAA-871 / DC3000).